A 311-amino-acid polypeptide reads, in one-letter code: Heme A synthase (311 aa).

The Cytoplasmic portion of the chain corresponds to 1-6 (MQRFIK). A helical transmembrane segment spans residues 7–27 (WLAVITSLDLLIVLLGGALVT). Residues 28–62 (KTGSGQGCGKSWPLCNGEFVPSNLSMETIIELSHR) lie on the Extracellular side of the membrane. Cysteines 35 and 42 form a disulfide. Residue Glu-58 is part of the active site. His-61 contributes to the heme o binding site. Residues 63-83 (LTSGSAGILVTLLCILSWKYY) form a helical membrane-spanning segment. The Cytoplasmic portion of the chain corresponds to 84-91 (KHVRETKT). A helical membrane pass occupies residues 92 to 112 (LAILSFVFLVAQALMGAAAVV). The Extracellular segment spans residues 113–121 (WGQMPAVLA). The helical transmembrane segment at 122–142 (IHFGISLISFASVILLTCLIF) threads the bilayer. Residue His-123 coordinates heme o. At 143-159 (EIDQKFDARSLIMDKKM) the chain is on the cytoplasmic side. Residues 160–180 (KFHIYGVTIYSYIVVYTGALV) form a helical membrane-spanning segment. The Extracellular segment spans residues 181-211 (RHERASLACPDFPLCSKNRPMPTQLHEWVQM). Cys-189 and Cys-195 are oxidised to a cystine. Residues 212-232 (GHRVAAMLIFAWILYAMILAI) form a helical membrane-spanning segment. His-213 is a binding site for heme b. The Cytoplasmic portion of the chain corresponds to 233–243 (RHYKQQPVVYW). The helical transmembrane segment at 244–264 (GWIISFILVTLQAIVGILVVF) threads the bilayer. The Extracellular segment spans residues 265–271 (TNASLSM). The chain crosses the membrane as a helical span at residues 272–292 (ALLHSLFISCLFAVLCYLVML). His-275 serves as a coordination point for heme b. Residues 293–311 (GTRSKVNAKEAASISKQTK) are Cytoplasmic-facing.

This sequence belongs to the COX15/CtaA family. Type 1 subfamily. As to quaternary structure, interacts with CtaB. Heme b is required as a cofactor.

Its subcellular location is the cell membrane. The enzyme catalyses Fe(II)-heme o + 2 A + H2O = Fe(II)-heme a + 2 AH2. The protein operates within porphyrin-containing compound metabolism; heme A biosynthesis; heme A from heme O: step 1/1. Catalyzes the conversion of heme O to heme A by two successive hydroxylations of the methyl group at C8. The first hydroxylation forms heme I, the second hydroxylation results in an unstable dihydroxymethyl group, which spontaneously dehydrates, resulting in the formyl group of heme A. The polypeptide is Heme A synthase (Bacillus cereus (strain AH187)).